A 130-amino-acid chain; its full sequence is Flagellar assembly factor FliW (130 aa).

This sequence belongs to the FliW family. Interacts with translational regulator CsrA and flagellin(s).

It is found in the cytoplasm. Acts as an anti-CsrA protein, binds CsrA and prevents it from repressing translation of its target genes, one of which is flagellin. Binds to flagellin and participates in the assembly of the flagellum. The chain is Flagellar assembly factor FliW from Borrelia hermsii (strain HS1 / DAH).